Here is a 395-residue protein sequence, read N- to C-terminus: Probable nitrate/nitrite transporter NarK2 (395 aa).

The next 12 helical transmembrane spans lie at 8 to 28 (LVLATWISVVNFWAWNLIGPL), 45 to 65 (LLVATPILVGALGRIVTGPLT), 72 to 92 (AMLIAVTLASILPVLAVGVAA), 98 to 118 (ALLVFFGLFLGVAGTIFAVGI), 131 to 151 (GFSTGVFGMGMVGTALSAFFT), 157 to 177 (WFGLFTTHAIVAAALASTAVV), 205 to 225 (LPVTWEMSFLYAIVFGGFVAF), 244 to 266 (AGARTAGFALAAVLARPVGGWLS), 274 to 294 (VVLASLAGTALLAFAAALQPP), 301 to 321 (ATFITLAVCLGVGTGGVFAWV), 333 to 353 (VTGIVAAAGGLGGYFPPLVMG), and 365 to 385 (VGLLLLVATALVACTYTALHA).

Belongs to the major facilitator superfamily. Nitrate/nitrite porter (TC 2.A.1.8) family.

The protein resides in the cell membrane. Functionally, involved in excretion of nitrite produced by the dissimilatory reduction of nitrate. This chain is Probable nitrate/nitrite transporter NarK2 (narK2), found in Mycobacterium tuberculosis (strain CDC 1551 / Oshkosh).